The sequence spans 463 residues: ATP-dependent protease ATPase subunit HslU (463 aa).

ATP is bound by residues V19, G61 to E66, D277, E341, and R413.

Belongs to the ClpX chaperone family. HslU subfamily. A double ring-shaped homohexamer of HslV is capped on each side by a ring-shaped HslU homohexamer. The assembly of the HslU/HslV complex is dependent on binding of ATP.

It is found in the cytoplasm. ATPase subunit of a proteasome-like degradation complex; this subunit has chaperone activity. The binding of ATP and its subsequent hydrolysis by HslU are essential for unfolding of protein substrates subsequently hydrolyzed by HslV. HslU recognizes the N-terminal part of its protein substrates and unfolds these before they are guided to HslV for hydrolysis. This chain is ATP-dependent protease ATPase subunit HslU, found in Shouchella clausii (strain KSM-K16) (Alkalihalobacillus clausii).